A 187-amino-acid chain; its full sequence is Dihydrofolate reductase (187 aa).

The DHFR domain occupies 4 to 185 (PLNCIVAVSQ…IKYKFEVYEK (182 aa)). NADP(+) is bound by residues Ala-10 and 16–22 (GIGKNGD). 31 to 36 (EFKYFQ) lines the substrate pocket. Lys-33 is modified (N6-acetyllysine; alternate). Position 33 is an N6-succinyllysine; alternate (Lys-33). 55–57 (RKT) lines the NADP(+) pocket. Arg-71 contributes to the substrate binding site. NADP(+) contacts are provided by residues 77-79 (SRE) and 117-124 (GGSSVYQE).

Belongs to the dihydrofolate reductase family. Homodimer.

The protein localises to the mitochondrion. It is found in the cytoplasm. It catalyses the reaction (6S)-5,6,7,8-tetrahydrofolate + NADP(+) = 7,8-dihydrofolate + NADPH + H(+). It functions in the pathway cofactor biosynthesis; tetrahydrofolate biosynthesis; 5,6,7,8-tetrahydrofolate from 7,8-dihydrofolate: step 1/1. Functionally, key enzyme in folate metabolism. Contributes to the de novo mitochondrial thymidylate biosynthesis pathway. Catalyzes an essential reaction for de novo glycine and purine synthesis, and for DNA precursor synthesis. Binds its own mRNA. The sequence is that of Dihydrofolate reductase (Dhfr) from Rattus norvegicus (Rat).